The following is a 152-amino-acid chain: Putative RRN3-like protein RRN3P1 (152 aa).

This sequence belongs to the RRN3 family.

This Homo sapiens (Human) protein is Putative RRN3-like protein RRN3P1 (RRN3P1).